A 1188-amino-acid chain; its full sequence is DNA-directed RNA polymerase subunit beta (1188 aa).

The protein belongs to the RNA polymerase beta chain family. The RNAP catalytic core consists of 2 alpha, 1 beta, 1 beta' and 1 omega subunit. When a sigma factor is associated with the core the holoenzyme is formed, which can initiate transcription.

It carries out the reaction RNA(n) + a ribonucleoside 5'-triphosphate = RNA(n+1) + diphosphate. Its function is as follows. DNA-dependent RNA polymerase catalyzes the transcription of DNA into RNA using the four ribonucleoside triphosphates as substrates. This chain is DNA-directed RNA polymerase subunit beta, found in Streptococcus equi subsp. zooepidemicus (strain H70).